Here is a 216-residue protein sequence, read N- to C-terminus: ADP-sugar pyrophosphatase (216 aa).

Residue methionine 1 is modified to N-acetylmethionine. Phosphoserine is present on residues serine 3 and serine 10. Tryptophan 28 provides a ligand contact to substrate. A Glycyl lysine isopeptide (Lys-Gly) (interchain with G-Cter in SUMO2) cross-link involves residue lysine 42. Threonine 45 is subject to Phosphothreonine. Residues 46-47 and arginine 51 each bind substrate; that span reads WE. Positions 57 to 194 constitute a Nudix hydrolase domain; the sequence is QTADGVAVIP…EEHLTVDARV (138 aa). Phosphotyrosine is present on tyrosine 74. A substrate-binding site is contributed by arginine 84. Residue alanine 96 participates in Mg(2+) binding. The short motif at 97–118 is the Nudix box element; that stretch reads GLIDDGETPEAAALRELEEETG. A substrate-binding site is contributed by leucine 98. Mg(2+)-binding residues include glutamate 112 and glutamate 116. Residue aspartate 133 coordinates substrate. A Mg(2+)-binding site is contributed by glutamate 163. Lysine 207 and lysine 215 each carry N6-acetyllysine.

Belongs to the Nudix hydrolase family. Homodimer. Interacts with PARG. Requires Mg(2+) as cofactor. Phosphorylation at Thr-45 is required for homodimer stability; dephosphorylation results in destabilization of the homodimer. Dephosphorylation at Thr-45 promotes the ATP-synthesis activity.

It localises to the nucleus. The catalysed reaction is D-ribose 5-phosphate + ATP + H(+) = ADP-D-ribose + diphosphate. It catalyses the reaction ADP-D-ribose + H2O = D-ribose 5-phosphate + AMP + 2 H(+). It carries out the reaction 8-oxo-dGDP + H2O = 8-oxo-dGMP + phosphate + H(+). Its function is as follows. Enzyme that can either act as an ADP-sugar pyrophosphatase in absence of diphosphate or catalyze the synthesis of ATP in presence of diphosphate. In absence of diphosphate, hydrolyzes with similar activities various modified nucleoside diphosphates such as ADP-ribose, ADP-mannose, ADP-glucose, 8-oxo-GDP and 8-oxo-dGDP. Can also hydrolyze other nucleotide sugars with low activity. In presence of diphosphate, mediates the synthesis of ATP in the nucleus by catalyzing the conversion of ADP-ribose to ATP and ribose 5-phosphate. Nuclear ATP synthesis takes place when dephosphorylated at Thr-45. Nuclear ATP generation is required for extensive chromatin remodeling events that are energy-consuming. Does not play a role in U8 snoRNA decapping activity. Binds U8 snoRNA. The chain is ADP-sugar pyrophosphatase from Pongo abelii (Sumatran orangutan).